A 173-amino-acid polypeptide reads, in one-letter code: Enhancer of split mdelta protein (173 aa).

The 58-residue stretch at 15 to 72 folds into the bHLH domain; that stretch reads YRKVTKPLLERKRRARMNLYLDELKDLIVDTMDAQGEQVSKLEKADILELTVNYLKAQ. In terms of domain architecture, Orange spans 93–126; it reads FRAGYTQAAYEVSHIFSTVPGLDLKFGTHLMKQL. The interval 147–173 is disordered; sequence VNLADQKRSKSPREEDIHHGEEVWRPW. Residues 151–173 are compositionally biased toward basic and acidic residues; the sequence is DQKRSKSPREEDIHHGEEVWRPW. Residues 170-173 carry the WRPW motif motif; sequence WRPW.

Transcription repression requires formation of a complex with a corepressor protein (Groucho).

Its subcellular location is the nucleus. Its function is as follows. Transcriptional repressor of genes that require a bHLH protein for their transcription. May serve as a transcriptional regulator of the Achaete-scute complex (AS-C) genes. Contributes to the neural-epidermal lineage decision during early neurogenesis. As part of the Notch signaling pathway, required to maintain the self-renewal and identity of type II neuroblasts by regulating the expression of the transcriptional repressor erm. In Drosophila melanogaster (Fruit fly), this protein is Enhancer of split mdelta protein.